The following is a 530-amino-acid chain: Zinc finger protein ZIC 4 (530 aa).

Composition is skewed to basic residues over residues 31–40 and 97–113; these read HHPHHHHHPP and NPHH…HHMA. Disordered stretches follow at residues 31-50 and 87-138; these read HHPH…TGYP and PGAL…SYSS. A C2H2-type 1; atypical zinc finger spans residues 284–317; sequence LICKWIEEDQLPKKLCSKTFSTMHELVTHVTVEH. The C2H2-type 2; atypical zinc-finger motif lies at 326 to 353; sequence HICFWEECPREGKPFKAKYKLVNHIRVH. C2H2-type zinc fingers lie at residues 359–383, 389–413, and 419–443; these read FPCP…KRTH, FKCE…SHVH, and YNCK…MKVH. The segment at 432 to 530 is disordered; the sequence is HPSSLRKHMK…YSNWQATNTF (99 aa). Residues 435–444 are compositionally biased toward basic residues; sequence SLRKHMKVHC. Composition is skewed to low complexity over residues 455-467 and 474-485; these read SSIP…SSDS and TSSQPEPPTSSQ. The span at 520–530 shows a compositional bias: polar residues; the sequence is SYSNWQATNTF.

This sequence belongs to the GLI C2H2-type zinc-finger protein family. In terms of tissue distribution, at mid-gastrula stage (stage 11.5), weakly expressed in the prospective neural fold. Expressed in the neural plate border region at early neurula stage (stage 15) with strongest expression in the prospective regions of the hyoid and branchial crests. Expression in the dorsal central nervous system (CNS) continues through late neurula stage and early tail bud stages with expression strongest in the olfactory placode and expression levels increasing as development progresses. Becomes expressed in somites.

The protein resides in the nucleus. In terms of biological role, may bind to DNA. Induces neural and neural crest differentiation. Does not induce anterior neural tissue. The sequence is that of Zinc finger protein ZIC 4 (zic4) from Xenopus laevis (African clawed frog).